Here is a 67-residue protein sequence, read N- to C-terminus: Large ribosomal subunit protein bL35 (67 aa).

This sequence belongs to the bacterial ribosomal protein bL35 family.

This is Large ribosomal subunit protein bL35 from Methylorubrum populi (strain ATCC BAA-705 / NCIMB 13946 / BJ001) (Methylobacterium populi).